The chain runs to 782 residues: Beta-mannosyltransferase 9 (782 aa).

Topologically, residues 1–26 (MEKLIQSTISLFISLSLKISTKSYKS) are cytoplasmic. Residues 27-47 (IISILFIISLLSIILTTTITV) form a helical membrane-spanning segment. Over 48 to 782 (YHDPERIITT…GKDKGKDKSN (735 aa)) the chain is Extracellular. The tract at residues 66 to 96 (KSVFTASSPKQQDKLQQEIDQHQSDNSHEQQ) is disordered. Positions 76 to 96 (QQDKLQQEIDQHQSDNSHEQQ) are enriched in basic and acidic residues. 3 N-linked (GlcNAc...) asparagine glycosylation sites follow: Asn-445, Asn-648, and Asn-699.

Belongs to the BMT family.

Its subcellular location is the membrane. Beta-mannosyltransferase involved in cell wall biosynthesis through beta-1,2-mannosylation of cell wall phosphopeptidomannan. This chain is Beta-mannosyltransferase 9 (BMT9), found in Candida albicans (strain SC5314 / ATCC MYA-2876) (Yeast).